We begin with the raw amino-acid sequence, 93 residues long: MFEQRVNSDVLTVSTVNSQDQVTQKPLRDSVKQALKNYFAQLNGQDVNDLYELVLAEVEQPLLDMVMQYTRGNQTRAALMMGINRGTLRKKLK.

Positions 74 to 93 (QTRAALMMGINRGTLRKKLK) form a DNA-binding region, H-T-H motif.

The protein belongs to the transcriptional regulatory Fis family. In terms of assembly, homodimer.

In terms of biological role, activates ribosomal RNA transcription. Plays a direct role in upstream activation of rRNA promoters. The chain is DNA-binding protein Fis from Klebsiella pneumoniae.